The sequence spans 319 residues: HTH-type transcriptional regulator YidZ (319 aa).

The HTH lysR-type domain occupies 8–65; it reads LDLNLLLCLQLLMQERSVTKAAKRMNVTPSAVSKSLAKLRAWFDDPLFVNTPLGLAPT. Positions 25–44 form a DNA-binding region, H-T-H motif; the sequence is VTKAAKRMNVTPSAVSKSLA.

This sequence belongs to the LysR transcriptional regulatory family.

Functionally, involved in anaerobic NO protection. This Salmonella agona (strain SL483) protein is HTH-type transcriptional regulator YidZ.